The primary structure comprises 67 residues: MTDDIFSVPCPICQKQVEWSDKSPFRPFCCKRCQLIDLGEWAAEEKAIPCESADFAMNDEQEDWRAH.

Residues Cys10, Cys13, Cys29, and Cys33 each contribute to the Zn(2+) site.

This sequence belongs to the DNA gyrase inhibitor YacG family. Interacts with GyrB. The cofactor is Zn(2+).

Functionally, inhibits all the catalytic activities of DNA gyrase by preventing its interaction with DNA. Acts by binding directly to the C-terminal domain of GyrB, which probably disrupts DNA binding by the gyrase. The chain is DNA gyrase inhibitor YacG from Pasteurella multocida (strain Pm70).